The following is a 235-amino-acid chain: uncharacterized protein (235 aa).

Residues 27–47 (AMKLWSTWITLLILTFFCSEC) form a helical membrane-spanning segment. Positions 124–185 (YFWGESKYVP…CCGYDCCSNS (62 aa)) constitute a CX domain. The chain crosses the membrane as a helical span at residues 187 to 207 (IFTSIFSLLVILLIVSVLSIF).

The protein resides in the membrane. This is an uncharacterized protein from Caenorhabditis elegans.